Consider the following 90-residue polypeptide: Auxin-induced protein 6B (90 aa).

The protein belongs to the ARG7 family.

The protein is Auxin-induced protein 6B of Glycine max (Soybean).